The primary structure comprises 160 residues: Putative 4-hydroxy-4-methyl-2-oxoglutarate aldolase (160 aa).

Substrate contacts are provided by residues Gly-76–Ile-79 and Arg-98. Asp-99 lines the a divalent metal cation pocket.

The protein belongs to the class II aldolase/RraA-like family. As to quaternary structure, homotrimer. A divalent metal cation serves as cofactor.

The catalysed reaction is 4-hydroxy-4-methyl-2-oxoglutarate = 2 pyruvate. The enzyme catalyses oxaloacetate + H(+) = pyruvate + CO2. Functionally, catalyzes the aldol cleavage of 4-hydroxy-4-methyl-2-oxoglutarate (HMG) into 2 molecules of pyruvate. Also contains a secondary oxaloacetate (OAA) decarboxylase activity due to the common pyruvate enolate transition state formed following C-C bond cleavage in the retro-aldol and decarboxylation reactions. This Alcanivorax borkumensis (strain ATCC 700651 / DSM 11573 / NCIMB 13689 / SK2) protein is Putative 4-hydroxy-4-methyl-2-oxoglutarate aldolase.